The following is a 144-amino-acid chain: Large ribosomal subunit protein uL15 (144 aa).

The tract at residues 1 to 44 (MKLNELMPSEGSRTNRKRIGRGTSSGTGKTAGRGQKGQKARGKV) is disordered. Residues 23 to 35 (TSSGTGKTAGRGQ) are compositionally biased toward gly residues.

It belongs to the universal ribosomal protein uL15 family. As to quaternary structure, part of the 50S ribosomal subunit.

Its function is as follows. Binds to the 23S rRNA. The sequence is that of Large ribosomal subunit protein uL15 from Pediococcus pentosaceus (strain ATCC 25745 / CCUG 21536 / LMG 10740 / 183-1w).